The primary structure comprises 525 residues: Exoglucanase 1 (525 aa).

Residues 1 to 18 form the signal peptide; it reads MRTAKFATLAALVASAAA. A catalytic region spans residues 19–467; sequence QQACSLTTER…AGNGGNNGGN (449 aa). Residue glutamate 231 is the Nucleophile of the active site. Residue glutamate 236 is the Proton donor of the active site. Asparagine 289 is a glycosylation site (N-linked (GlcNAc...) asparagine). Residues 454 to 492 are disordered; that stretch reads GLPGAGNGGNNGGNPPPPTTTTSSAPATTTTASAGPKAG. A compositionally biased stretch (gly residues) spans 456–465; the sequence is PGAGNGGNNG. Residues 468–489 form a linker region; that stretch reads PPPPTTTTSSAPATTTTASAGP. Over residues 473–489 the composition is skewed to low complexity; sequence TTTSSAPATTTTASAGP. Residues 489 to 525 enclose the CBM1 domain; the sequence is PKAGRWQQCGGIGFTGPTQCEEPYICTKLNDWYSQCL. 2 cysteine pairs are disulfide-bonded: cysteine 497-cysteine 514 and cysteine 508-cysteine 524.

Belongs to the glycosyl hydrolase 7 (cellulase C) family.

It carries out the reaction Hydrolysis of (1-&gt;4)-beta-D-glucosidic linkages in cellulose and cellotetraose, releasing cellobiose from the non-reducing ends of the chains.. Functionally, the biological conversion of cellulose to glucose generally requires three types of hydrolytic enzymes: (1) Endoglucanases which cut internal beta-1,4-glucosidic bonds; (2) Exocellobiohydrolases that cut the disaccharide cellobiose from the non-reducing end of the cellulose polymer chain; (3) Beta-1,4-glucosidases which hydrolyze the cellobiose and other short cello-oligosaccharides to glucose. The protein is Exoglucanase 1 (CBH-1) of Humicola insolens (Soft-rot fungus).